The sequence spans 498 residues: U4/U6 small nuclear ribonucleoprotein Prp31 (498 aa).

2 coiled-coil regions span residues 84-119 and 180-214; these read EAAPEYKVIVDANNLTVEIENELNIIHKFIRDKYSK and DEELERIEEACDMALELNQSKHRIYEYVESRMSFI. Residues 214–332 enclose the Nop domain; sequence IAPNLSIIVG…IERKFDKWQE (119 aa). A disordered region spans residues 333 to 356; sequence PPPVKQVKPLPAPLDGQRKKRGGR. Positions 350–363 match the Nuclear localization signal (NLS) motif; that stretch reads RKKRGGRRYRKMKE.

This sequence belongs to the PRP31 family. Identified in the spliceosome B complex. Component of the U4/U6-U5 tri-snRNP complex. Component of some MLL1/MLL complex.

Its subcellular location is the nucleus. It is found in the nucleus speckle. The protein localises to the cajal body. Functionally, involved in pre-mRNA splicing as component of the spliceosome. Required for the assembly of the U4/U5/U6 tri-snRNP complex, one of the building blocks of the spliceosome. In Xenopus tropicalis (Western clawed frog), this protein is U4/U6 small nuclear ribonucleoprotein Prp31 (prpf31).